We begin with the raw amino-acid sequence, 664 residues long: Alkaline/neutral invertase C, mitochondrial (664 aa).

Phosphoserine occurs at positions 41, 125, and 657.

It belongs to the glycosyl hydrolase 100 family. In terms of tissue distribution, expressed in seedlings, roots and flowers.

It localises to the mitochondrion. The enzyme catalyses Hydrolysis of terminal non-reducing beta-D-fructofuranoside residues in beta-D-fructofuranosides.. Mitochondrial invertase that cleaves sucrose into glucose and fructose and is involved in the regulation of aerial tissue development and floral transition. May be modulating hormone balance in relation to the radicle emergence. The polypeptide is Alkaline/neutral invertase C, mitochondrial (Arabidopsis thaliana (Mouse-ear cress)).